Consider the following 142-residue polypeptide: uncharacterized protein (142 aa).

Residues 18 to 137 (QSRSYSCGPA…RIFTGNVLVV (120 aa)) form the Peptidase C39 domain.

This is an uncharacterized protein from Methanothermobacter thermautotrophicus (strain ATCC 29096 / DSM 1053 / JCM 10044 / NBRC 100330 / Delta H) (Methanobacterium thermoautotrophicum).